The primary structure comprises 484 residues: Aspartyl/glutamyl-tRNA(Asn/Gln) amidotransferase subunit B (484 aa).

This sequence belongs to the GatB/GatE family. GatB subfamily. In terms of assembly, heterotrimer of A, B and C subunits.

The catalysed reaction is L-glutamyl-tRNA(Gln) + L-glutamine + ATP + H2O = L-glutaminyl-tRNA(Gln) + L-glutamate + ADP + phosphate + H(+). It catalyses the reaction L-aspartyl-tRNA(Asn) + L-glutamine + ATP + H2O = L-asparaginyl-tRNA(Asn) + L-glutamate + ADP + phosphate + 2 H(+). Allows the formation of correctly charged Asn-tRNA(Asn) or Gln-tRNA(Gln) through the transamidation of misacylated Asp-tRNA(Asn) or Glu-tRNA(Gln) in organisms which lack either or both of asparaginyl-tRNA or glutaminyl-tRNA synthetases. The reaction takes place in the presence of glutamine and ATP through an activated phospho-Asp-tRNA(Asn) or phospho-Glu-tRNA(Gln). The chain is Aspartyl/glutamyl-tRNA(Asn/Gln) amidotransferase subunit B from Dechloromonas aromatica (strain RCB).